Here is a 227-residue protein sequence, read N- to C-terminus: GRF-interacting factor 1 (227 aa).

Residues 186–227 (RSGSGAKEGSTSLSVDVRGGTSSGAQSGDGEYLKVGTEEEGS) are disordered.

It belongs to the SS18 family. Interacts with several GRFs. Interacts with GRF10. Interacts with GRF1. In terms of tissue distribution, expressed in shoots, aerial roots, ears and tassels. Expressed in the shoot apical meristem (SAM), young leaf primordia, leaf margins, inflorescence meristem, floral meristem and spikelet meristem.

Transcription coactivator that plays a role in the regulation of meristematic function in leaves, stems and inflorescences. Regulates shoot architecture and meristem determinacy. Binds to the inflorescence architecture gene UB3 (unbranched3). Regulates the expression of several genes involved in inflorescence architecture. Component of a network formed by the microRNA396 (miRNA396), the GRFs and their interacting factors (GIFs) acting in the regulation of meristem function, at least partially through the control of cell proliferation. Associates with the core SWI/SNF chromatin-remodeling complex and specific GRFs to tightly regulate the transition between cell division and cell expansion in growing leaves. This Zea mays (Maize) protein is GRF-interacting factor 1.